We begin with the raw amino-acid sequence, 1100 residues long: Tyrosine-protein kinase JAK3 (1100 aa).

A cytokine/interferon/growth hormone receptors region spans residues 1 to 223; sequence MAPPSEETPL…RRTVVQALRR (223 aa). The residue at position 17 (serine 17) is a Phosphoserine. The FERM domain maps to 24–353; it reads GALHVLLPPR…GYFRLICDSR (330 aa). Residues 372–472 form the SH2; atypical domain; that stretch reads LCHGPITLDF…GTALNLTSCC (101 aa). The region spanning 517-777 is the Protein kinase 1 domain; that stretch reads LEWHENLGHG…AILRDLNGLI (261 aa). Position 781 is a phosphotyrosine; by autocatalysis (tyrosine 781). Positions 818 to 1091 constitute a Protein kinase 2 domain; that stretch reads LKYISLLGKG…PAFDTLSPQL (274 aa). Residues 824-832 and lysine 851 contribute to the ATP site; that span reads LGKGNFGSV. Phosphotyrosine is present on residues tyrosine 900 and tyrosine 935. Aspartate 945 serves as the catalytic Proton acceptor. Phosphotyrosine; by autocatalysis occurs at positions 976 and 977.

This sequence belongs to the protein kinase superfamily. Tyr protein kinase family. JAK subfamily. As to quaternary structure, interacts with STAM2 and MYO18A. Interacts with SHB. Interacts with CD69. Post-translationally, autophosphorylated, leading to regulate its activity. IL2 promotes phosphorylation on tyrosine residues, including autophosphorylation on Tyr-781. Dephosphorylation of Tyr-976 and Tyr-977 by PTPN2 negatively regulates cytokine-mediated signaling. As to expression, in contrast with the ubiquitous expression of the other JAKs, JAK3 is predominantly expressed in hematopoietic tissues.

The protein resides in the endomembrane system. It localises to the cytoplasm. The enzyme catalyses L-tyrosyl-[protein] + ATP = O-phospho-L-tyrosyl-[protein] + ADP + H(+). Its function is as follows. Non-receptor tyrosine kinase involved in various processes such as cell growth, development, or differentiation. Mediates essential signaling events in both innate and adaptive immunity and plays a crucial role in hematopoiesis during T-cells development. In the cytoplasm, plays a pivotal role in signal transduction via its association with type I receptors sharing the common subunit gamma such as IL2R, IL4R, IL7R, IL9R, IL15R and IL21R. Following ligand binding to cell surface receptors, phosphorylates specific tyrosine residues on the cytoplasmic tails of the receptor, creating docking sites for STATs proteins. Subsequently, phosphorylates the STATs proteins once they are recruited to the receptor. Phosphorylated STATs then form homodimer or heterodimers and translocate to the nucleus to activate gene transcription. For example, upon IL2R activation by IL2, JAK1 and JAK3 molecules bind to IL2R beta (IL2RB) and gamma chain (IL2RG) subunits inducing the tyrosine phosphorylation of both receptor subunits on their cytoplasmic domain. Then, STAT5A and STAT5B are recruited, phosphorylated and activated by JAK1 and JAK3. Once activated, dimerized STAT5 translocates to the nucleus and promotes the transcription of specific target genes in a cytokine-specific fashion. This chain is Tyrosine-protein kinase JAK3, found in Rattus norvegicus (Rat).